We begin with the raw amino-acid sequence, 326 residues long: Phosphate acyltransferase (326 aa).

Belongs to the PlsX family. In terms of assembly, homodimer. Probably interacts with PlsY.

Its subcellular location is the cytoplasm. It catalyses the reaction a fatty acyl-[ACP] + phosphate = an acyl phosphate + holo-[ACP]. It functions in the pathway lipid metabolism; phospholipid metabolism. Its function is as follows. Catalyzes the reversible formation of acyl-phosphate (acyl-PO(4)) from acyl-[acyl-carrier-protein] (acyl-ACP). This enzyme utilizes acyl-ACP as fatty acyl donor, but not acyl-CoA. The protein is Phosphate acyltransferase of Macrococcus caseolyticus (strain JCSC5402) (Macrococcoides caseolyticum).